The sequence spans 317 residues: Adenine deaminase (317 aa).

Residues H14, H16, and H194 each coordinate Zn(2+). The active-site Proton donor is the E197. A Zn(2+)-binding site is contributed by D275. D276 lines the substrate pocket.

This sequence belongs to the metallo-dependent hydrolases superfamily. Adenosine and AMP deaminases family. Adenine deaminase type 2 subfamily. Requires Zn(2+) as cofactor.

The enzyme catalyses adenine + H2O + H(+) = hypoxanthine + NH4(+). In terms of biological role, catalyzes the hydrolytic deamination of adenine to hypoxanthine. Plays an important role in the purine salvage pathway and in nitrogen catabolism. The sequence is that of Adenine deaminase from Pseudomonas syringae pv. tomato (strain ATCC BAA-871 / DC3000).